The sequence spans 272 residues: RELT-like protein 1 (272 aa).

Positions 1 to 23 (MALWGLPGSAVLAASVFVGGAVS) are cleaved as a signal peptide. Residues 24–58 (SPLVAADNTGSHTLHSRAETTPSSPTNNPGNGHPE) are Extracellular-facing. The segment at 33-52 (GSHTLHSRAETTPSSPTNNP) is disordered. A helical transmembrane segment spans residues 59–79 (YIAYVLVPVFFVMGLLGVLIC). The Cytoplasmic portion of the chain corresponds to 80 to 272 (HLLKKKGYRC…PVKRERSDTE (193 aa)). Residues 90–114 (TTEAEQEVEEEKVEKIELNDSINEN) are a coiled coil. Residues serine 110 and serine 115 each carry the phosphoserine modification. 2 disordered regions span residues 146-171 (DIES…PGAT) and 235-272 (EHKS…SDTE). Residues 156–166 (PGSPPVSPGPL) are compositionally biased toward pro residues. Residues 235–245 (EHKSNQKERRS) are compositionally biased toward basic and acidic residues. A phosphoserine mark is found at serine 245 and serine 248.

Belongs to the RELT family. In terms of assembly, interacts with RELT, RELL2, OXSR1 and PLSCR1.

It localises to the cell membrane. Its function is as follows. Induces activation of MAPK14/p38 cascade, when overexpressed. Induces apoptosis, when overexpressed. The sequence is that of RELT-like protein 1 (Rell1) from Mus musculus (Mouse).